Consider the following 409-residue polypeptide: Outer membrane protein YopM (409 aa).

LRR repeat units lie at residues 72 to 91 (QAHELELNNLGLSSLPELPP), 92 to 113 (HLESLVASCNSLTELPELPQSL), 114 to 131 (KSLLVDNNNLKALSDLPP), 132 to 153 (LLEYLGVSNNQLEKLPELQNSS), 154 to 173 (FLKIIDVDNNSLKKLPDLPP), 174 to 195 (SLEFIAAGNNQLEELPELQNLP), 196 to 215 (FLTAIYADNNSLKKLPDLPL), 216 to 237 (SLESIVAGNNILEELPELQNLP), 238 to 257 (FLTTIYADNNLLKTLPDLPP), 258 to 279 (SLEALNVRDNYLTDLPELPQSL), 280 to 297 (TFLDVSENIFSGLSELPP), 298 to 317 (NLYYLNASSNEIRSLCDLPP), 318 to 339 (SLEELNVSNNKLIELPALPPRL), 340 to 357 (ERLIASFNHLAEVPELPQ), and 358 to 379 (NLKQLHVEYNPLREFPDIPESV). Ca(2+) contacts are provided by Asn246 and Asp266. Positions 307, 308, and 326 each coordinate Ca(2+).

It belongs to the LRR-containing bacterial E3 ligase family. In terms of assembly, homotetramer forming a hollow cylinder with an inner diameter of approximately 35 angstroms.

The protein resides in the cell outer membrane. The protein localises to the secreted. Effector proteins function to alter host cell physiology and promote bacterial survival in host tissues. The protein is Outer membrane protein YopM (yopM) of Yersinia pestis.